The following is a 765-amino-acid chain: Glycine--tRNA ligase (765 aa).

The transit peptide at Met1–Met87 directs the protein to the mitochondrion. The interval Thr41–Asn73 is disordered. Pro residues predominate over residues Pro47–Pro58. The WHEP-TRS domain occupies Gln95 to Phe151. Glu331 provides a ligand contact to glycine. Residues Arg363–Glu365 and Arg374–Val375 each bind ATP. Glycine is bound at residue Glu382. Glu489–Cys490 is a binding site for ATP. A glycine-binding site is contributed by Glu609–Ser611. Arg616 provides a ligand contact to ATP.

It belongs to the class-II aminoacyl-tRNA synthetase family. Homodimer.

The protein localises to the mitochondrion. Its subcellular location is the cytoplasm. The protein resides in the cell projection. It localises to the axon. The catalysed reaction is 2 ATP + H(+) = P(1),P(4)-bis(5'-adenosyl) tetraphosphate + diphosphate. It catalyses the reaction tRNA(Gly) + glycine + ATP = glycyl-tRNA(Gly) + AMP + diphosphate. Functionally, catalyzes the ATP-dependent ligation of glycine to the 3'-end of its cognate tRNA, via the formation of an aminoacyl-adenylate intermediate (Gly-AMP). Also produces diadenosine tetraphosphate (Ap4A), a universal pleiotropic signaling molecule needed for cell regulation pathways, by direct condensation of 2 ATPs. Thereby, may play a special role in Ap4A homeostasis. Required for terminal arborization of both dendrites and axons during development. The protein is Glycine--tRNA ligase of Drosophila melanogaster (Fruit fly).